The sequence spans 238 residues: Protein A47 (238 aa).

Belongs to the orthopoxvirus A47 protein family.

This is Protein A47 from Vaccinia virus (strain Ankara) (VACV).